The sequence spans 166 residues: Lipoprotein signal peptidase (166 aa).

Helical transmembrane passes span 12-32, 70-90, and 102-122; these read WLWL…LILQ, WFFA…MYRS, and ALII…GFVV. Active-site residues include Asp-123 and Asp-141. The helical transmembrane segment at 137 to 157 threads the bilayer; it reads FNLADSAICIGAALIVLEGFL.

Belongs to the peptidase A8 family.

It is found in the cell inner membrane. The enzyme catalyses Release of signal peptides from bacterial membrane prolipoproteins. Hydrolyzes -Xaa-Yaa-Zaa-|-(S,diacylglyceryl)Cys-, in which Xaa is hydrophobic (preferably Leu), and Yaa (Ala or Ser) and Zaa (Gly or Ala) have small, neutral side chains.. Its pathway is protein modification; lipoprotein biosynthesis (signal peptide cleavage). Its function is as follows. This protein specifically catalyzes the removal of signal peptides from prolipoproteins. In Salmonella agona (strain SL483), this protein is Lipoprotein signal peptidase.